We begin with the raw amino-acid sequence, 141 residues long: MLERTFSIIKPDAVKRNLIGQIVSKLEQNGLKVIASKMVFLTVQEAKGFYAEHDGKPFFDTLIKNMTAGPIVVQVLEGDDAIAKNREIMGPTDPENAPAGSIRKEYAISMQQNSVHGSDSPESAQREISYFFSEIEVFSAS.

Residues Lys10, Phe58, Arg86, Thr92, Arg103, and Asn113 each contribute to the ATP site. Catalysis depends on His116, which acts as the Pros-phosphohistidine intermediate.

It belongs to the NDK family. In terms of assembly, homotetramer. Requires Mg(2+) as cofactor.

The protein localises to the cytoplasm. It catalyses the reaction a 2'-deoxyribonucleoside 5'-diphosphate + ATP = a 2'-deoxyribonucleoside 5'-triphosphate + ADP. The enzyme catalyses a ribonucleoside 5'-diphosphate + ATP = a ribonucleoside 5'-triphosphate + ADP. Its function is as follows. Major role in the synthesis of nucleoside triphosphates other than ATP. The ATP gamma phosphate is transferred to the NDP beta phosphate via a ping-pong mechanism, using a phosphorylated active-site intermediate. This is Nucleoside diphosphate kinase from Hydrogenovibrio crunogenus (strain DSM 25203 / XCL-2) (Thiomicrospira crunogena).